The primary structure comprises 421 residues: Putative aspartate aminotransferase, cytoplasmic 2 (421 aa).

Lys249 is modified (N6-(pyridoxal phosphate)lysine).

This sequence belongs to the class-I pyridoxal-phosphate-dependent aminotransferase family. Homodimer. It depends on pyridoxal 5'-phosphate as a cofactor.

The protein localises to the cytoplasm. It carries out the reaction L-aspartate + 2-oxoglutarate = oxaloacetate + L-glutamate. The sequence is that of Putative aspartate aminotransferase, cytoplasmic 2 (GOT1L1) from Homo sapiens (Human).